Here is a 435-residue protein sequence, read N- to C-terminus: tRNA-2-methylthio-N(6)-dimethylallyladenosine synthase (435 aa).

The 116-residue stretch at 5-120 (KKLFIETLGC…ISEVLHKERA (116 aa)) folds into the MTTase N-terminal domain. [4Fe-4S] cluster-binding residues include C14, C51, C83, C152, C156, and C159. The region spanning 138-372 (RTSPYKAYIN…NLAVNILDEK (235 aa)) is the Radical SAM core domain. The TRAM domain occupies 374-435 (KTHLGKIYRV…RTILSGEIVG (62 aa)).

It belongs to the methylthiotransferase family. MiaB subfamily. As to quaternary structure, monomer. The cofactor is [4Fe-4S] cluster.

The protein resides in the cytoplasm. It carries out the reaction N(6)-dimethylallyladenosine(37) in tRNA + (sulfur carrier)-SH + AH2 + 2 S-adenosyl-L-methionine = 2-methylsulfanyl-N(6)-dimethylallyladenosine(37) in tRNA + (sulfur carrier)-H + 5'-deoxyadenosine + L-methionine + A + S-adenosyl-L-homocysteine + 2 H(+). Its function is as follows. Catalyzes the methylthiolation of N6-(dimethylallyl)adenosine (i(6)A), leading to the formation of 2-methylthio-N6-(dimethylallyl)adenosine (ms(2)i(6)A) at position 37 in tRNAs that read codons beginning with uridine. The chain is tRNA-2-methylthio-N(6)-dimethylallyladenosine synthase from Sulfurimonas denitrificans (strain ATCC 33889 / DSM 1251) (Thiomicrospira denitrificans (strain ATCC 33889 / DSM 1251)).